The chain runs to 327 residues: GMP reductase (327 aa).

Residue C176 is the Thioimidate intermediate of the active site. I205 to V228 contacts NADP(+).

The protein belongs to the IMPDH/GMPR family. GuaC type 2 subfamily.

It carries out the reaction IMP + NH4(+) + NADP(+) = GMP + NADPH + 2 H(+). Its function is as follows. Catalyzes the irreversible NADPH-dependent deamination of GMP to IMP. It functions in the conversion of nucleobase, nucleoside and nucleotide derivatives of G to A nucleotides, and in maintaining the intracellular balance of A and G nucleotides. The chain is GMP reductase from Streptococcus agalactiae serotype III (strain NEM316).